The sequence spans 365 residues: DNA replication and repair protein RecF (365 aa).

23–30 serves as a coordination point for ATP; that stretch reads GPNGIGKS.

The protein belongs to the RecF family.

The protein localises to the cytoplasm. Functionally, the RecF protein is involved in DNA metabolism; it is required for DNA replication and normal SOS inducibility. RecF binds preferentially to single-stranded, linear DNA. It also seems to bind ATP. The protein is DNA replication and repair protein RecF of Parasynechococcus marenigrum (strain WH8102).